The chain runs to 286 residues: ATP synthase gamma chain (286 aa).

It belongs to the ATPase gamma chain family. F-type ATPases have 2 components, CF(1) - the catalytic core - and CF(0) - the membrane proton channel. CF(1) has five subunits: alpha(3), beta(3), gamma(1), delta(1), epsilon(1). CF(0) has three main subunits: a, b and c.

Its subcellular location is the cell inner membrane. In terms of biological role, produces ATP from ADP in the presence of a proton gradient across the membrane. The gamma chain is believed to be important in regulating ATPase activity and the flow of protons through the CF(0) complex. The protein is ATP synthase gamma chain of Flavobacterium johnsoniae (strain ATCC 17061 / DSM 2064 / JCM 8514 / BCRC 14874 / CCUG 350202 / NBRC 14942 / NCIMB 11054 / UW101) (Cytophaga johnsonae).